A 319-amino-acid polypeptide reads, in one-letter code: Protein sprouty homolog 1 (319 aa).

N-acetylmethionine is present on Met1. A disordered region spans residues 54–157; sequence TEGPSVVKRP…HRSERAIRTQ (104 aa). Basic and acidic residues predominate over residues 69 to 79; that stretch reads PRQEKHERTHE. Residues 112-131 are compositionally biased toward low complexity; sequence SRSTSTGSAASSGSNSSASS. The SPR domain maps to 183-295; the sequence is QCGKCKCGEC…CYDWIHRPGC (113 aa).

Belongs to the sprouty family. As to quaternary structure, forms heterodimers with SPRY2. Interacts with TESK1. Interacts with CAV1 (via C-terminus).

The protein resides in the cytoplasm. The protein localises to the membrane. Its function is as follows. Inhibits fibroblast growth factor (FGF)-induced retinal lens fiber differentiation, probably by inhibiting FGF-mediated phosphorylation of ERK1/2. Inhibits TGFB-induced epithelial-to-mesenchymal transition in lens epithelial cells. The polypeptide is Protein sprouty homolog 1 (SPRY1) (Bos taurus (Bovine)).